The chain runs to 439 residues: NETWWYNPYMDIHSHWKQFDQVPAAVYYSLGIFIAICGIIGCAGNGIVIYLFTKTKSLQTPANMFIINLAFSDFTFSLVNGFPMMTISCFLKHWVFGQAACKVYGLIGGIFGLTSIMTMTMISIDRYNVIRRPMSASKKMSHRKAFIMIVFVWIWSTIWAIGPIFGWGAYQLEGVLCNCSFDYITRDASTRSNIVCMYIFAFMFPIVVIFFCYFNIVMSVSNHEKEMAAMAKRLNAKELRKAQAGASAEMKLAKISIVIVTQSLLSWSPYAIVALLAQFGPIEWVTPYAAQLPVMFAKASAIHNPMIYSVSHPKFREAIASNFPWILTCCQYDEKEIEDDKDAEAEIPAAEQSGGESVDAAQMKEMMAMMQKMQAQQQQQPAYPPQGYPPQGYPPPPPQGYPPQGYPPQGYPPQGYPPPPQGPPPQGPPPQAAPPQGVD.

N1 carries N-linked (GlcNAc...) asparagine glycosylation. Residues 1 to 26 lie on the Extracellular side of the membrane; it reads NETWWYNPYMDIHSHWKQFDQVPAAV. The chain crosses the membrane as a helical span at residues 27 to 51; sequence YYSLGIFIAICGIIGCAGNGIVIYL. At 52–63 the chain is on the cytoplasmic side; it reads FTKTKSLQTPAN. A helical transmembrane segment spans residues 64-90; it reads MFIINLAFSDFTFSLVNGFPMMTISCF. Topologically, residues 91–102 are extracellular; sequence LKHWVFGQAACK. An intrachain disulfide couples C101 to C179. The helical transmembrane segment at 103–124 threads the bilayer; that stretch reads VYGLIGGIFGLTSIMTMTMISI. The 'Ionic lock' involved in activated form stabilization signature appears at 125–127; sequence DRY. Over 125–144 the chain is Cytoplasmic; it reads DRYNVIRRPMSASKKMSHRK. A helical membrane pass occupies residues 145–165; it reads AFIMIVFVWIWSTIWAIGPIF. At 166–192 the chain is on the extracellular side; sequence GWGAYQLEGVLCNCSFDYITRDASTRS. A helical transmembrane segment spans residues 193–217; the sequence is NIVCMYIFAFMFPIVVIFFCYFNIV. Residues 218 to 254 lie on the Cytoplasmic side of the membrane; sequence MSVSNHEKEMAAMAKRLNAKELRKAQAGASAEMKLAK. The chain crosses the membrane as a helical span at residues 255-276; it reads ISIVIVTQSLLSWSPYAIVALL. Residues 277–286 lie on the Extracellular side of the membrane; that stretch reads AQFGPIEWVT. Residues 287 to 308 traverse the membrane as a helical segment; that stretch reads PYAAQLPVMFAKASAIHNPMIY. K298 is modified (N6-(retinylidene)lysine). Topologically, residues 309 to 439 are cytoplasmic; it reads SVSHPKFREA…PQAAPPQGVD (131 aa). Residues C329 and C330 are each lipidated (S-palmitoyl cysteine). Residues 369–381 show a composition bias toward low complexity; that stretch reads MMQKMQAQQQQQP. A disordered region spans residues 369–439; that stretch reads MMQKMQAQQQ…PQAAPPQGVD (71 aa). The segment covering 382–433 has biased composition (pro residues); that stretch reads AYPPQGYPPQGYPPPPPQGYPPQGYPPQGYPPQGYPPPPQGPPPQGPPPQAA.

This sequence belongs to the G-protein coupled receptor 1 family. Opsin subfamily. In terms of processing, contains one covalently linked retinal chromophore. Upon light absorption, the covalently bound 11-cis-retinal is converted to all-trans-retinal. After hydrolysis of the Schiff base and release of the covalently bound all-trans-retinal, active rhodopsin is regenerated by binding of a fresh molecule of 11-cis-retinal.

The protein resides in the cell projection. It localises to the rhabdomere membrane. Photoreceptor required for image-forming vision at low light intensity. Light-induced isomerization of 11-cis to all-trans retinal triggers a conformational change that activates signaling via G-proteins. Signaling mediates the activation of phospholipase C. Subsequent receptor phosphorylation mediates displacement of the bound G-protein alpha subunit by arrestin and terminates signaling. In Alloteuthis subulata (Squid), this protein is Rhodopsin (RHO).